Reading from the N-terminus, the 494-residue chain is Alpha-amylase-related protein (494 aa).

Residues 1–20 (MIKFALALTLCLAGASLSLA) form the signal peptide. Gln21 carries the pyrrolidone carboxylic acid modification. The cysteines at positions 48 and 104 are disulfide-linked. 3 residues coordinate Ca(2+): Asn118, Gln169, and Asp178. The cysteines at positions 157 and 171 are disulfide-linked. Arg206 provides a ligand contact to chloride. Asp208 serves as the catalytic Nucleophile. Position 212 (His212) interacts with Ca(2+). Residue Glu245 is the Proton donor of the active site. Chloride-binding residues include Asn308 and Arg343. Cystine bridges form between Cys376–Cys382, Cys418–Cys441, and Cys448–Cys460.

It belongs to the glycosyl hydrolase 13 family. As to quaternary structure, monomer. The cofactor is Ca(2+). Chloride is required as a cofactor.

Its subcellular location is the secreted. It carries out the reaction Endohydrolysis of (1-&gt;4)-alpha-D-glucosidic linkages in polysaccharides containing three or more (1-&gt;4)-alpha-linked D-glucose units.. In Drosophila jambulina (Fruit fly), this protein is Alpha-amylase-related protein (Amyrel).